Reading from the N-terminus, the 175-residue chain is uncharacterized protein (175 aa).

The segment covering 1 to 17 (MKVEGGESMHESEEGRD) has biased composition (basic and acidic residues). Residues 1–21 (MKVEGGESMHESEEGRDVPNG) are disordered.

This is an uncharacterized protein from Bacillus thuringiensis subsp. kurstaki.